Here is a 736-residue protein sequence, read N- to C-terminus: Microtubule-associated protein mu-2 (736 aa).

This sequence belongs to the orthoreovirus mu-2 protein family. In terms of assembly, interacts with protein mu-NS; in viral inclusions. Interacts with polymerase lambda-3; this interaction stimulates the ATPase activity of mu-2. It depends on a divalent metal cation as a cofactor.

It localises to the virion. The protein localises to the host cytoplasm. It is found in the host cytoskeleton. In terms of biological role, minor inner capsid (core) component. Displays NTPase and RNA 5'-triphosphatase (RTPase) activities. ATP is the preferred substrate for hydrolysis. May function as a cofactor of polymerase lambda-3. Associates with microtubules and plays a role in the formation, structural organization and morphology of viral inclusions, where the assembly of cores and the replication of viral RNA occur. Together with mu-NS, recruits the other core proteins to these inclusions. This is Microtubule-associated protein mu-2 (M1) from Mammalia (T2J).